Here is a 545-residue protein sequence, read N- to C-terminus: Phenylalanine--tRNA ligase beta subunit (545 aa).

One can recognise a B5 domain in the interval 268 to 343 (FLHKIQNVRE…MSIGYNNLEP (76 aa)). Positions 321, 327, 330, and 331 each coordinate Mg(2+).

It belongs to the phenylalanyl-tRNA synthetase beta subunit family. Type 2 subfamily. In terms of assembly, tetramer of two alpha and two beta subunits. It depends on Mg(2+) as a cofactor.

It localises to the cytoplasm. It carries out the reaction tRNA(Phe) + L-phenylalanine + ATP = L-phenylalanyl-tRNA(Phe) + AMP + diphosphate + H(+). This is Phenylalanine--tRNA ligase beta subunit from Saccharolobus islandicus (strain M.16.27) (Sulfolobus islandicus).